The following is a 426-amino-acid chain: Histidine--tRNA ligase (426 aa).

Belongs to the class-II aminoacyl-tRNA synthetase family. As to quaternary structure, homodimer.

It localises to the cytoplasm. It catalyses the reaction tRNA(His) + L-histidine + ATP = L-histidyl-tRNA(His) + AMP + diphosphate + H(+). The protein is Histidine--tRNA ligase of Corynebacterium kroppenstedtii (strain DSM 44385 / JCM 11950 / CIP 105744 / CCUG 35717).